Reading from the N-terminus, the 80-residue chain is Growth factor (80 aa).

A signal peptide spans 1–19 (MATRNLVASLLCIMYAVHA). One can recognise an EGF-like domain in the interval 29–73 (HVKVCNHDYENYCLNNGTCFTIALDNVSITPFCVCRINYEGSRCQ). 3 disulfide bridges follow: C33-C47, C41-C61, and C63-C72. 2 N-linked (GlcNAc...) asparagine; by host glycosylation sites follow: N44 and N54.

It localises to the secreted. This chain is Growth factor, found in Oryctolagus cuniculus (Rabbit).